Reading from the N-terminus, the 147-residue chain is uncharacterized protein (147 aa).

It to M.jannaschii MJ0215.

This is an uncharacterized protein from Methanocaldococcus jannaschii (strain ATCC 43067 / DSM 2661 / JAL-1 / JCM 10045 / NBRC 100440) (Methanococcus jannaschii).